A 75-amino-acid chain; its full sequence is MATVVRLTRMGRNKRPFYRIVVTDSRKRRDSGWIESIGYYNPMVEPEVVKVDADRLAYWKSVGAKLSDRVARITK.

Belongs to the bacterial ribosomal protein bS16 family.

In Campylobacter fetus subsp. fetus (strain 82-40), this protein is Small ribosomal subunit protein bS16.